We begin with the raw amino-acid sequence, 404 residues long: Formate-dependent phosphoribosylglycinamide formyltransferase (404 aa).

N(1)-(5-phospho-beta-D-ribosyl)glycinamide-binding positions include 27-28 and Glu87; that span reads EL. ATP-binding positions include Arg120, Lys162, 167–172, 202–205, and Glu210; these read SSGKGQ and EGFI. One can recognise an ATP-grasp domain in the interval 125–320; it reads RLAAETLGLP…EFELHARALL (196 aa). Residues Glu279 and Glu291 each contribute to the Mg(2+) site. N(1)-(5-phospho-beta-D-ribosyl)glycinamide contacts are provided by residues Asp298, Lys367, and 374–375; that span reads RR.

Belongs to the PurK/PurT family. As to quaternary structure, homodimer.

The enzyme catalyses N(1)-(5-phospho-beta-D-ribosyl)glycinamide + formate + ATP = N(2)-formyl-N(1)-(5-phospho-beta-D-ribosyl)glycinamide + ADP + phosphate + H(+). It functions in the pathway purine metabolism; IMP biosynthesis via de novo pathway; N(2)-formyl-N(1)-(5-phospho-D-ribosyl)glycinamide from N(1)-(5-phospho-D-ribosyl)glycinamide (formate route): step 1/1. In terms of biological role, involved in the de novo purine biosynthesis. Catalyzes the transfer of formate to 5-phospho-ribosyl-glycinamide (GAR), producing 5-phospho-ribosyl-N-formylglycinamide (FGAR). Formate is provided by PurU via hydrolysis of 10-formyl-tetrahydrofolate. In Bordetella pertussis (strain Tohama I / ATCC BAA-589 / NCTC 13251), this protein is Formate-dependent phosphoribosylglycinamide formyltransferase.